The chain runs to 409 residues: Nucleoprotein (409 aa).

2 disordered regions span residues 1-84 (MASG…KGGR) and 121-194 (ADTK…DSGD). Over residues 15 to 31 (PVIKLGGPKPPKVGSSG) the composition is skewed to low complexity. Residues 29–160 (SSGNASWFQA…GNFRWDFIPL (132 aa)) are RNA-binding. Residues 31–156 (GNASWFQAIK…GGPDGNFRWD (126 aa)) enclose the CoV N NTD domain. The span at 70–84 (YWRRQARFKPGKGGR) shows a compositional bias: basic residues. Positions 162–179 (RGRSGRSTAASSAAASRA) are enriched in low complexity. The span at 180–192 (PSREGSRGRRSDS) shows a compositional bias: basic and acidic residues. Residues Ser-190 and Ser-192 each carry the phosphoserine; by host modification. One can recognise a CoV N CTD domain in the interval 215-331 (TKAKADEMAH…QCVDGVGTRP (117 aa)). A dimerization region spans residues 226–333 (RYCKRTIPPN…VDGVGTRPKD (108 aa)). Disulfide bonds link Cys-281-Cys-308 and Cys-320-Cys-323. Positions 327-396 (VGTRPKDDEP…QLEFYDEPKV (70 aa)) are disordered. Over residues 358 to 367 (QRPKKEKKLK) the composition is skewed to basic residues. Over residues 368–384 (KQDDEADKALTSDEERN) the composition is skewed to basic and acidic residues. The residue at position 378 (Thr-378) is a Phosphothreonine; by host. The residue at position 379 (Ser-379) is a Phosphoserine; by host.

Belongs to the gammacoronavirus nucleocapsid protein family. Homooligomer. Both monomeric and oligomeric forms interact with RNA. Interacts with protein M. Interacts with NSP3; this interaction serves to tether the genome to the newly translated replicase-transcriptase complex at a very early stage of infection. ADP-ribosylated. The ADP-ribosylation is retained in the virion during infection. In terms of processing, phosphorylated on serine and threonine residues.

It is found in the virion. The protein localises to the host endoplasmic reticulum-Golgi intermediate compartment. It localises to the host Golgi apparatus. Packages the positive strand viral genome RNA into a helical ribonucleocapsid (RNP) and plays a fundamental role during virion assembly through its interactions with the viral genome and membrane protein M. Plays an important role in enhancing the efficiency of subgenomic viral RNA transcription as well as viral replication. This is Nucleoprotein from Gallus gallus (Chicken).